Consider the following 476-residue polypeptide: tRNA-2-methylthio-N(6)-dimethylallyladenosine synthase (476 aa).

Positions 5–122 (KKLYIKTWGC…LPEMINQVKG (118 aa)) constitute an MTTase N-terminal domain. [4Fe-4S] cluster contacts are provided by C14, C51, C85, C159, C163, and C166. In terms of domain architecture, Radical SAM core spans 145–377 (RAEGPSAFVS…QQRINQQAMS (233 aa)). Residues 380-443 (RAMLGSVQRI…ANSLRGKVIR (64 aa)) form the TRAM domain.

Belongs to the methylthiotransferase family. MiaB subfamily. In terms of assembly, monomer. Requires [4Fe-4S] cluster as cofactor.

The protein resides in the cytoplasm. It catalyses the reaction N(6)-dimethylallyladenosine(37) in tRNA + (sulfur carrier)-SH + AH2 + 2 S-adenosyl-L-methionine = 2-methylsulfanyl-N(6)-dimethylallyladenosine(37) in tRNA + (sulfur carrier)-H + 5'-deoxyadenosine + L-methionine + A + S-adenosyl-L-homocysteine + 2 H(+). In terms of biological role, catalyzes the methylthiolation of N6-(dimethylallyl)adenosine (i(6)A), leading to the formation of 2-methylthio-N6-(dimethylallyl)adenosine (ms(2)i(6)A) at position 37 in tRNAs that read codons beginning with uridine. The chain is tRNA-2-methylthio-N(6)-dimethylallyladenosine synthase from Photorhabdus laumondii subsp. laumondii (strain DSM 15139 / CIP 105565 / TT01) (Photorhabdus luminescens subsp. laumondii).